Reading from the N-terminus, the 429-residue chain is Ribosomal RNA small subunit methyltransferase B (429 aa).

S-adenosyl-L-methionine-binding positions include 254–260 (CAAPGGK), aspartate 277, aspartate 303, and aspartate 322. Cysteine 375 serves as the catalytic Nucleophile.

The protein belongs to the class I-like SAM-binding methyltransferase superfamily. RsmB/NOP family.

It localises to the cytoplasm. It catalyses the reaction cytidine(967) in 16S rRNA + S-adenosyl-L-methionine = 5-methylcytidine(967) in 16S rRNA + S-adenosyl-L-homocysteine + H(+). In terms of biological role, specifically methylates the cytosine at position 967 (m5C967) of 16S rRNA. This Shigella sonnei (strain Ss046) protein is Ribosomal RNA small subunit methyltransferase B.